The following is a 202-amino-acid chain: Protein lin-28 homolog A (202 aa).

Positions 1 to 31 are disordered; that stretch reads MGSVSNQQFAGAKPGEEPSGDSPKAENESQP. The CSD domain occupies 33-106; that stretch reads HGSGICKWFN…GLESIRVTGP (74 aa). The flexible linker stretch occupies residues 107-130; the sequence is GGVFCIGSERRPKSKSLQKRRSKG. CCHC-type zinc fingers lie at residues 131–148 and 153–170; these read DRCY…ECKL and KKCH…NCPA. Zn(2+) is bound by residues Cys133, Cys136, His141, Cys146, Cys155, Cys158, His163, and Cys168. Residues 169 to 202 are disordered; sequence PAKAQQSPSSQGKPAYFREKEDMHSSALLPETRE.

Belongs to the lin-28 family. Monomer.

Its subcellular location is the cytoplasm. The protein localises to the rough endoplasmic reticulum. It localises to the P-body. The protein resides in the stress granule. It is found in the nucleus. Its subcellular location is the nucleolus. RNA-binding protein that inhibits processing of pre-let-7 miRNAs and regulates translation of mRNAs that control developmental timing, pluripotency and metabolism. Seems to recognize a common structural G-quartet (G4) feature in its miRNA and mRNA targets. 'Translational enhancer' that drives specific mRNAs to polysomes and increases the efficiency of protein synthesis. Its association with the translational machinery and target mRNAs results in an increased number of initiation events per molecule of mRNA and, indirectly, in mRNA stabilization. Suppressor of microRNA (miRNA) biogenesis, including that of let-7. Binds specific target miRNA precursors (pre-miRNAs), recognizing an 5'-GGAG-3' motif found in their terminal loop, and recruits uridylyltransferase. This results in the terminal uridylation of target pre-miRNAs. Uridylated pre-miRNAs fail to be processed by Dicer and undergo degradation. Localized to the periendoplasmic reticulum area, binds to a large number of spliced mRNAs and inhibits the translation of mRNAs destined for the ER, reducing the synthesis of transmembrane proteins, ER or Golgi lumen proteins, and secretory proteins. Binds to and enhances the translation of mRNAs for several metabolic enzymes, increasing glycolysis and oxidative phosphorylation. Which, with the let-7 repression may enhance tissue repair in adult tissue. This chain is Protein lin-28 homolog A (LIN28A), found in Gallus gallus (Chicken).